The primary structure comprises 445 residues: Phosphoglucosamine mutase (445 aa).

Ser103 serves as the catalytic Phosphoserine intermediate. Mg(2+)-binding residues include Ser103, Asp240, Asp242, and Asp244. Ser103 carries the post-translational modification Phosphoserine.

Belongs to the phosphohexose mutase family. Mg(2+) is required as a cofactor. In terms of processing, activated by phosphorylation.

The catalysed reaction is alpha-D-glucosamine 1-phosphate = D-glucosamine 6-phosphate. Its function is as follows. Catalyzes the conversion of glucosamine-6-phosphate to glucosamine-1-phosphate. The chain is Phosphoglucosamine mutase from Cellvibrio japonicus (strain Ueda107) (Pseudomonas fluorescens subsp. cellulosa).